A 140-amino-acid chain; its full sequence is UPF0134 protein MPN_094 (140 aa).

This sequence belongs to the UPF0134 family.

In Mycoplasma pneumoniae (strain ATCC 29342 / M129 / Subtype 1) (Mycoplasmoides pneumoniae), this protein is UPF0134 protein MPN_094.